Reading from the N-terminus, the 177-residue chain is Transcription termination/antitermination protein NusG (177 aa).

In terms of domain architecture, KOW spans 126–156; that stretch reads PGETVRVIDGPFADFNGVVEEVNYEKSRIQV.

Belongs to the NusG family.

Its function is as follows. Participates in transcription elongation, termination and antitermination. In Pseudomonas aeruginosa (strain ATCC 15692 / DSM 22644 / CIP 104116 / JCM 14847 / LMG 12228 / 1C / PRS 101 / PAO1), this protein is Transcription termination/antitermination protein NusG.